The following is a 162-amino-acid chain: Dihydrofolate reductase type 3 (162 aa).

The DHFR domain occupies 2–160 (LISLIAALAH…YACEFVTLSR (159 aa)).

This sequence belongs to the dihydrofolate reductase family. Monomer.

It carries out the reaction (6S)-5,6,7,8-tetrahydrofolate + NADP(+) = 7,8-dihydrofolate + NADPH + H(+). It functions in the pathway cofactor biosynthesis; tetrahydrofolate biosynthesis; 5,6,7,8-tetrahydrofolate from 7,8-dihydrofolate: step 1/1. In terms of biological role, key enzyme in folate metabolism. Catalyzes an essential reaction for de novo glycine and purine synthesis, and for DNA precursor synthesis. The protein is Dihydrofolate reductase type 3 (dhfrIII) of Salmonella typhimurium.